The chain runs to 389 residues: Putative DNA processing protein DprA (389 aa).

It belongs to the DprA/Smf family.

Its function is as follows. May help load RecA onto ssDNA. The protein is Putative DNA processing protein DprA of Mycobacterium tuberculosis (strain CDC 1551 / Oshkosh).